Consider the following 510-residue polypeptide: Chorion transcription factor Cf2 (510 aa).

Residues 1-10 (MIKSTTNPQE) are compositionally biased toward polar residues. The interval 1–40 (MIKSTTNPQEQRLPRPEDQSPAPPPPPPSSATTSTAAPAT) is disordered. Positions 30-40 (SATTSTAAPAT) are enriched in low complexity. 2 C2H2-type zinc fingers span residues 74–97 (HYCP…QLCH) and 125–148 (HPCF…RLAH). The segment covering 222 to 237 (PEEQHHQQQLQAEHHH) has biased composition (basic and acidic residues). The tract at residues 222–279 (PEEQHHQQQLQAEHHHQQQHQQQQQQQQQQQELLEQQQREMQEQAQQQQVHHHQQDQD) is disordered. Low complexity predominate over residues 240–257 (QHQQQQQQQQQQQELLEQ). 5 consecutive C2H2-type zinc fingers follow at residues 366–388 (HKCP…RKIH), 401–423 (YTCS…TRIH), 429–451 (FRCG…LTTH), 457–479 (FHCG…IRTH), and 485–508 (YTCP…TKLH).

Isoform I is found in embryos, pupae and adult somatic tissue; isoform II occurs in embryos, pupae, ovaries, testis and to a lesser extent in adult somatic tissue.

The protein resides in the nucleus. Functionally, transcriptional regulator; binds to the promoter region of Cp15. Also binds to its own promoter, thus having a probable autoregulatory role. The sequence is that of Chorion transcription factor Cf2 (Cf2) from Drosophila melanogaster (Fruit fly).